Consider the following 794-residue polypeptide: Furin (794 aa).

The N-terminal stretch at 1–26 (MELRPWLLWVVAATGTLVLLAADAQG) is a signal peptide. The propeptide at 27–107 (QKVFTNTWAV…QQVAKRRTKR (81 aa)) is inhibition peptide. Residues 108–715 (DVYQEPTDPK…AGLLPSHLPE (608 aa)) are Lumenal-facing. Asp-115 contributes to the Ca(2+) binding site. In terms of domain architecture, Peptidase S8 spans 121 to 435 (QWYLSGVTQR…YGLLDAGAMV (315 aa)). Residue Asp-153 is the Charge relay system of the active site. Asp-154 is a binding site for substrate. Residues Asp-162, Asp-174, Asp-179, and Asp-181 each coordinate Ca(2+). The segment at 162–183 (DLAGNYDPGASFDVNDQDPDPQ) is disordered. Substrate is bound at residue 191 to 192 (DN). His-194 acts as the Charge relay system in catalysis. Ca(2+) is bound by residues Val-205, Asn-208, Val-210, and Gly-212. Intrachain disulfides connect Cys-211–Cys-360 and Cys-303–Cys-333. Substrate is bound by residues Glu-236, 253–258 (SWGPED), Asp-264, and 292–295 (ASGN). Residue Asp-258 participates in Ca(2+) binding. A Ca(2+)-binding site is contributed by Asp-301. Substrate-binding residues include Asp-306 and Tyr-308. Residue Glu-331 coordinates Ca(2+). The active-site Charge relay system is the Ser-368. Ser-368 is a substrate binding site. N-linked (GlcNAc...) asparagine glycans are attached at residues Asn-387 and Asn-440. The P/Homo B domain occupies 444–576 (VAPQRKCIID…TLVLYGTAPE (133 aa)). A disulfide bridge links Cys-450 with Cys-474. The short motif at 498–500 (RGD) is the Cell attachment site element. Residue Asn-553 is glycosylated (N-linked (GlcNAc...) asparagine). 2 FU repeats span residues 577–620 (GLPV…GFAP) and 638–681 (ASVC…QSQS). The segment at 673–696 (QTCSRQSQSSRESPPQQQPPRLPP) is disordered. Residues 676-687 (SRQSQSSRESPP) show a composition bias toward low complexity. A helical transmembrane segment spans residues 716–738 (VVAGLSCAFIVLVFVTVFLVLQL). At 739–794 (RSGFSFRGVKVYTMDRGLISYKGLPPEAWQEECPSDSEEDEGRGERTAFIKDQSAL) the chain is on the cytoplasmic side. Residues 759 to 762 (YKGL) form a cell surface signal region. The segment covering 767-780 (WQEECPSDSEEDEG) has biased composition (acidic residues). Residues 767–794 (WQEECPSDSEEDEGRGERTAFIKDQSAL) form a disordered region. 2 positions are modified to phosphoserine; by CK2: Ser-773 and Ser-775. The Trans Golgi network signal motif lies at 773 to 779 (SDSEEDE).

The protein belongs to the peptidase S8 family. Furin subfamily. Interacts with FLNA. Binds to PACS1 which mediates TGN localization and connection to clathrin adapters. Interacts with LAMP1, LAMP2 and LAMP3. Ca(2+) serves as cofactor. Post-translationally, the inhibition peptide, which plays the role of an intramolecular chaperone, is autocatalytically removed in the endoplasmic reticulum (ER) and remains non-covalently bound to furin as a potent autoinhibitor. Following transport to the trans Golgi, a second cleavage within the inhibition propeptide results in propeptide dissociation and furin activation. Phosphorylation is required for TGN localization of the endoprotease. In vivo, exists as di-, mono- and non-phosphorylated forms. Seems to be expressed ubiquitously.

The protein resides in the golgi apparatus. It is found in the trans-Golgi network membrane. It localises to the cell membrane. The protein localises to the secreted. Its subcellular location is the endosome membrane. The enzyme catalyses Release of mature proteins from their proproteins by cleavage of -Arg-Xaa-Yaa-Arg-|-Zaa- bonds, where Xaa can be any amino acid and Yaa is Arg or Lys. Releases albumin, complement component C3 and von Willebrand factor from their respective precursors.. With respect to regulation, inhibited by the not secondly cleaved propeptide. Inhibited by m-guanidinomethyl-phenylacetyl-Arg-Val-Arg-(amidomethyl)-benzamidine (m-guanidinomethyl-Phac-RVR-Amb) and 4-guanidinomethyl-phenylacetyl-Arg-Tle-Arg-4-amidinobenzylamide (MI-1148). Inhibited by Decanoyl-Arg-Val-Lys-Arg-chloromethylketone (decanoyl-RVKR-CMK). Inhibited by heparin/heparan sulfate-binding. Ubiquitous endoprotease within constitutive secretory pathways capable of cleavage at the RX(K/R)R consensus motif. Mediates processing of TGFB1, an essential step in TGF-beta-1 activation. Converts through proteolytic cleavage the non-functional Brain natriuretic factor prohormone into its active hormone BNP(1-32). By mediating processing of accessory subunit ATP6AP1/Ac45 of the V-ATPase, regulates the acidification of dense-core secretory granules in islets of Langerhans cells. In terms of biological role, (Microbial infection) Cleaves and activates diphtheria toxin DT. Its function is as follows. (Microbial infection) Cleaves and activates anthrax toxin protective antigen (PA). Functionally, (Microbial infection) Cleaves and activates HIV-1 virus Envelope glycoprotein gp160. (Microbial infection) Required for H7N1 and H5N1 influenza virus infection probably by cleaving hemagglutinin. In terms of biological role, (Microbial infection) Able to cleave S.pneumoniae serine-rich repeat protein PsrP. Its function is as follows. (Microbial infection) Facilitates human coronaviruses EMC and SARS-CoV-2 infections by proteolytically cleaving the spike protein at the monobasic S1/S2 cleavage site. This cleavage is essential for spike protein-mediated cell-cell fusion and entry into human lung cells. Functionally, (Microbial infection) Facilitates mumps virus infection by proteolytically cleaving the viral fusion protein F. The protein is Furin of Homo sapiens (Human).